The chain runs to 146 residues: Small ribosomal subunit protein eS17 (146 aa).

It belongs to the eukaryotic ribosomal protein eS17 family. Component of the small ribosomal subunit (SSU). Mature N.crassa ribosomes consist of a small (40S) and a large (60S) subunit. The 40S small subunit contains 1 molecule of ribosomal RNA (18S rRNA) and at least 32 different proteins. The large 60S subunit contains 3 rRNA molecules (26S, 5.8S and 5S rRNA) and at least 42 different proteins.

The protein resides in the cytoplasm. In terms of biological role, component of the ribosome, a large ribonucleoprotein complex responsible for the synthesis of proteins in the cell. The small ribosomal subunit (SSU) binds messenger RNAs (mRNAs) and translates the encoded message by selecting cognate aminoacyl-transfer RNA (tRNA) molecules. The large subunit (LSU) contains the ribosomal catalytic site termed the peptidyl transferase center (PTC), which catalyzes the formation of peptide bonds, thereby polymerizing the amino acids delivered by tRNAs into a polypeptide chain. The nascent polypeptides leave the ribosome through a tunnel in the LSU and interact with protein factors that function in enzymatic processing, targeting, and the membrane insertion of nascent chains at the exit of the ribosomal tunnel. The polypeptide is Small ribosomal subunit protein eS17 (rps-17) (Neurospora crassa (strain ATCC 24698 / 74-OR23-1A / CBS 708.71 / DSM 1257 / FGSC 987)).